The following is a 352-amino-acid chain: UDP-N-acetylglucosamine--N-acetylmuramyl-(pentapeptide) pyrophosphoryl-undecaprenol N-acetylglucosamine transferase 3 (352 aa).

Residues 11 to 13, Arg164, Ser194, and Gln289 contribute to the UDP-N-acetyl-alpha-D-glucosamine site; that span reads SAG.

Belongs to the glycosyltransferase 28 family. MurG subfamily.

It localises to the cell membrane. It carries out the reaction di-trans,octa-cis-undecaprenyl diphospho-N-acetyl-alpha-D-muramoyl-L-alanyl-D-glutamyl-meso-2,6-diaminopimeloyl-D-alanyl-D-alanine + UDP-N-acetyl-alpha-D-glucosamine = di-trans,octa-cis-undecaprenyl diphospho-[N-acetyl-alpha-D-glucosaminyl-(1-&gt;4)]-N-acetyl-alpha-D-muramoyl-L-alanyl-D-glutamyl-meso-2,6-diaminopimeloyl-D-alanyl-D-alanine + UDP + H(+). The protein operates within cell wall biogenesis; peptidoglycan biosynthesis. Its function is as follows. Cell wall formation. Catalyzes the transfer of a GlcNAc subunit on undecaprenyl-pyrophosphoryl-MurNAc-pentapeptide (lipid intermediate I) to form undecaprenyl-pyrophosphoryl-MurNAc-(pentapeptide)GlcNAc (lipid intermediate II). This chain is UDP-N-acetylglucosamine--N-acetylmuramyl-(pentapeptide) pyrophosphoryl-undecaprenol N-acetylglucosamine transferase 3, found in Bacillus thuringiensis (strain Al Hakam).